Reading from the N-terminus, the 513-residue chain is 2,3-bisphosphoglycerate-independent phosphoglycerate mutase (513 aa).

Asp14 and Ser64 together coordinate Mn(2+). Ser64 (phosphoserine intermediate) is an active-site residue. Substrate is bound by residues His125, 155–156 (RD), Arg187, Arg193, 259–262 (RADR), and Lys333. Positions 400, 404, 441, 442, and 460 each coordinate Mn(2+).

Belongs to the BPG-independent phosphoglycerate mutase family. As to quaternary structure, monomer. Mn(2+) serves as cofactor.

It carries out the reaction (2R)-2-phosphoglycerate = (2R)-3-phosphoglycerate. It functions in the pathway carbohydrate degradation; glycolysis; pyruvate from D-glyceraldehyde 3-phosphate: step 3/5. Functionally, catalyzes the interconversion of 2-phosphoglycerate and 3-phosphoglycerate. The polypeptide is 2,3-bisphosphoglycerate-independent phosphoglycerate mutase (Pseudomonas fluorescens (strain ATCC BAA-477 / NRRL B-23932 / Pf-5)).